Reading from the N-terminus, the 158-residue chain is Urease subunit beta (158 aa).

The segment at 113–158 (EDDWRRSSAAGDAPQELPQVEAAERGRKLDEATDVGTEDTPEEGQN) is disordered. Basic and acidic residues predominate over residues 134 to 143 (AAERGRKLDE). The span at 144–158 (ATDVGTEDTPEEGQN) shows a compositional bias: acidic residues.

This sequence belongs to the urease beta subunit family. Heterotrimer of UreA (gamma), UreB (beta) and UreC (alpha) subunits. Three heterotrimers associate to form the active enzyme.

Its subcellular location is the cytoplasm. The catalysed reaction is urea + 2 H2O + H(+) = hydrogencarbonate + 2 NH4(+). It functions in the pathway nitrogen metabolism; urea degradation; CO(2) and NH(3) from urea (urease route): step 1/1. The sequence is that of Urease subunit beta from Corynebacterium glutamicum (strain R).